Consider the following 358-residue polypeptide: Methylthioribose-1-phosphate isomerase (358 aa).

Substrate-binding positions include 54–56 (RGA), Arg96, and Gln205. The active-site Proton donor is the Asp246. 256–257 (NK) is a substrate binding site.

It belongs to the eIF-2B alpha/beta/delta subunits family. MtnA subfamily.

The catalysed reaction is 5-(methylsulfanyl)-alpha-D-ribose 1-phosphate = 5-(methylsulfanyl)-D-ribulose 1-phosphate. It participates in amino-acid biosynthesis; L-methionine biosynthesis via salvage pathway; L-methionine from S-methyl-5-thio-alpha-D-ribose 1-phosphate: step 1/6. Functionally, catalyzes the interconversion of methylthioribose-1-phosphate (MTR-1-P) into methylthioribulose-1-phosphate (MTRu-1-P). The polypeptide is Methylthioribose-1-phosphate isomerase (Pseudomonas syringae pv. syringae (strain B728a)).